A 184-amino-acid polypeptide reads, in one-letter code: ATP synthase subunit b, chloroplastic (184 aa).

The helical transmembrane segment at 27–49 threads the bilayer; the sequence is LATNPINLSVVLGVLIFFGKGVL.

It belongs to the ATPase B chain family. In terms of assembly, F-type ATPases have 2 components, F(1) - the catalytic core - and F(0) - the membrane proton channel. F(1) has five subunits: alpha(3), beta(3), gamma(1), delta(1), epsilon(1). F(0) has four main subunits: a(1), b(1), b'(1) and c(10-14). The alpha and beta chains form an alternating ring which encloses part of the gamma chain. F(1) is attached to F(0) by a central stalk formed by the gamma and epsilon chains, while a peripheral stalk is formed by the delta, b and b' chains.

It is found in the plastid. The protein localises to the chloroplast thylakoid membrane. F(1)F(0) ATP synthase produces ATP from ADP in the presence of a proton or sodium gradient. F-type ATPases consist of two structural domains, F(1) containing the extramembraneous catalytic core and F(0) containing the membrane proton channel, linked together by a central stalk and a peripheral stalk. During catalysis, ATP synthesis in the catalytic domain of F(1) is coupled via a rotary mechanism of the central stalk subunits to proton translocation. Functionally, component of the F(0) channel, it forms part of the peripheral stalk, linking F(1) to F(0). This is ATP synthase subunit b, chloroplastic from Carica papaya (Papaya).